Reading from the N-terminus, the 1428-residue chain is DNA polymerase III PolC-type (1428 aa).

The Exonuclease domain maps to 414-570 (FVVFDVETTG…YDAEATGYLL (157 aa)).

This sequence belongs to the DNA polymerase type-C family. PolC subfamily.

It is found in the cytoplasm. The catalysed reaction is DNA(n) + a 2'-deoxyribonucleoside 5'-triphosphate = DNA(n+1) + diphosphate. In terms of biological role, required for replicative DNA synthesis. This DNA polymerase also exhibits 3' to 5' exonuclease activity. This Oceanobacillus iheyensis (strain DSM 14371 / CIP 107618 / JCM 11309 / KCTC 3954 / HTE831) protein is DNA polymerase III PolC-type.